The following is a 198-amino-acid chain: NAD(P)H dehydrogenase (quinone) (198 aa).

One can recognise a Flavodoxin-like domain in the interval 4 to 189; that stretch reads ILVLYYSMYG…SIARYQGEYV (186 aa). FMN contacts are provided by residues 10 to 15 and 78 to 80; these read SMYGHI and TRF. Residue tyrosine 12 coordinates NAD(+). Residue tryptophan 98 coordinates substrate. FMN-binding positions include 113–118 and histidine 133; that span reads STGTGG.

Belongs to the WrbA family. The cofactor is FMN.

It catalyses the reaction a quinone + NADH + H(+) = a quinol + NAD(+). The enzyme catalyses a quinone + NADPH + H(+) = a quinol + NADP(+). The sequence is that of NAD(P)H dehydrogenase (quinone) from Salmonella paratyphi B (strain ATCC BAA-1250 / SPB7).